Reading from the N-terminus, the 653-residue chain is Bifunctional lysine-specific demethylase and histidyl-hydroxylase NO66 (653 aa).

Low complexity predominate over residues 1 to 12 (MKKATTSAAAKS). 2 disordered regions span residues 1-50 (MKKA…DMLA) and 65-137 (FDDD…LERT). The span at 13–26 (QGNSKMQKNANNGT) shows a compositional bias: polar residues. Serine 44 bears the Phosphoserine mark. The span at 72 to 86 (STSKKTQSGSAAAAK) shows a compositional bias: low complexity. Serine 131 is modified (phosphoserine). Phosphothreonine is present on threonine 137. Position 138 is a phosphoserine (serine 138). Residues 184 to 208 (AEPTEEGNNNNDEKETETIETHKAD) are disordered. The segment covering 194 to 208 (NDEKETETIETHKAD) has biased composition (basic and acidic residues). In terms of domain architecture, JmjC spans 300 to 450 (FYSDGCSIRL…NLLETLMPMV (151 aa)). Residues histidine 351, aspartate 353, and histidine 416 each contribute to the Fe cation site.

Belongs to the ROX family. NO66 subfamily. Fe(2+) is required as a cofactor.

The protein resides in the nucleus. The enzyme catalyses N(6),N(6)-dimethyl-L-lysyl(36)-[histone H3] + 2 2-oxoglutarate + 2 O2 = L-lysyl(36)-[histone H3] + 2 formaldehyde + 2 succinate + 2 CO2. In terms of biological role, oxygenase that can act as both a histone lysine demethylase and a ribosomal histidine hydroxylase. Specifically demethylates 'Lys-4' (H3K4me) and 'Lys-36' (H3K36me) of histone H3, thereby playing a central role in histone code. In Drosophila melanogaster (Fruit fly), this protein is Bifunctional lysine-specific demethylase and histidyl-hydroxylase NO66.